The sequence spans 150 residues: uncharacterized protein (150 aa).

It localises to the plastid. Its subcellular location is the chloroplast. This is an uncharacterized protein from Pyropia yezoensis (Susabi-nori).